We begin with the raw amino-acid sequence, 247 residues long: NAD-dependent protein deacetylase (247 aa).

The region spanning 1 to 247 (METFKSILHE…EFARSLGMKK (247 aa)) is the Deacetylase sirtuin-type domain. The NAD(+) site is built by alanine 20, threonine 24, phenylalanine 31, arginine 32, glutamine 100, isoleucine 102, aspartate 103, and histidine 118. Phenylalanine 31 provides a ligand contact to nicotinamide. Residues isoleucine 102 and aspartate 103 each contribute to the nicotinamide site. Catalysis depends on histidine 118, which acts as the Proton acceptor. Residues cysteine 126, cysteine 129, cysteine 146, and cysteine 156 each coordinate Zn(2+). Residues threonine 192, serine 193, asparagine 218, and isoleucine 236 each coordinate NAD(+).

Belongs to the sirtuin family. Class U subfamily. Requires Zn(2+) as cofactor.

It is found in the cytoplasm. The enzyme catalyses N(6)-acetyl-L-lysyl-[protein] + NAD(+) + H2O = 2''-O-acetyl-ADP-D-ribose + nicotinamide + L-lysyl-[protein]. Its function is as follows. NAD-dependent protein deacetylase which modulates the activities of several enzymes which are inactive in their acetylated form. This Bacillus subtilis (strain 168) protein is NAD-dependent protein deacetylase.